Here is a 163-residue protein sequence, read N- to C-terminus: Phosphopantetheine adenylyltransferase (163 aa).

T11 provides a ligand contact to substrate. Residues 11–12 (TF) and H19 each bind ATP. Residues K43, L75, and R89 each contribute to the substrate site. Residues 90–92 (GLR), E100, and 125–131 (YSFISST) each bind ATP.

Belongs to the bacterial CoaD family. Homohexamer. Mg(2+) serves as cofactor.

It localises to the cytoplasm. The catalysed reaction is (R)-4'-phosphopantetheine + ATP + H(+) = 3'-dephospho-CoA + diphosphate. The protein operates within cofactor biosynthesis; coenzyme A biosynthesis; CoA from (R)-pantothenate: step 4/5. Its function is as follows. Reversibly transfers an adenylyl group from ATP to 4'-phosphopantetheine, yielding dephospho-CoA (dPCoA) and pyrophosphate. The protein is Phosphopantetheine adenylyltransferase of Acinetobacter baumannii (strain ACICU).